Here is a 116-residue protein sequence, read N- to C-terminus: MEKKKEVRALAKYVKMSAHKVRRVINQIRGRSYEEALISLEFLPYRACYPLLQLVSSAAANANNNLGLKKDTLLISEAKVDEASVSKRFQPRAQGRAYSIQKDTCHITIKIRERSK.

It belongs to the universal ribosomal protein uL22 family. As to quaternary structure, part of the 50S ribosomal subunit.

The protein resides in the plastid. It localises to the chloroplast. In terms of biological role, this protein binds specifically to 23S rRNA. The globular domain of the protein is located near the polypeptide exit tunnel on the outside of the subunit, while an extended beta-hairpin is found that lines the wall of the exit tunnel in the center of the 70S ribosome. The sequence is that of Large ribosomal subunit protein uL22c (rpl22) from Psilotum nudum (Whisk fern).